Reading from the N-terminus, the 2205-residue chain is Genome polyprotein (2205 aa).

Gly2 is lipidated: N-myristoyl glycine; by host. Residues 2 to 1518 are Cytoplasmic-facing; that stretch reads GAQVSSQKVG…NINRAMTILQ (1517 aa). The tract at residues 579–599 is amphipathic alpha-helix; sequence GLGDLIEGVVEGVTRNALTPL. The segment covering 598-613 has biased composition (polar residues); the sequence is PLTPVNNLPDTRSSGP. Residues 598–619 are disordered; the sequence is PLTPVNNLPDTRSSGPAHSKET. Catalysis depends on for protease 2A activity residues His899 and Asp917. Residues Cys934 and Cys936 each coordinate Zn(2+). Cys988 (for protease 2A activity) is an active-site residue. Zn(2+) contacts are provided by Cys994 and His996. A membrane-binding region spans residues 1126–1198; the sequence is GDSWLKKFTE…HQSCPSQEHQ (73 aa). An oligomerization region spans residues 1126 to 1264; it reads GDSWLKKFTE…SPGTGKSVAT (139 aa). Residues 1147–1151 form an RNA-binding region; sequence SNKIS. Residues 1230 to 1386 enclose the SF3 helicase domain; that stretch reads EHTINNYVQF…SEYSRDGKLN (157 aa). 1254 to 1261 serves as a coordination point for ATP; sequence GSPGTGKS. The Zn(2+) site is built by Cys1394, Cys1397, Cys1406, and Cys1411. The segment at 1394–1411 adopts a C4-type zinc-finger fold; sequence CKNCHQPANFKRCCPLVC. An RNA-binding region spans residues 1438–1445; the sequence is ERNRRSSI. An oligomerization region spans residues 1449–1454; sequence MEALFQ. Residues 1519–1534 lie within the membrane without spanning it; that stretch reads AVTTFAAVAGVVYVMY. At 1535–2205 the chain is on the cytoplasmic side; it reads KLFAGHQGAY…TLYRRWLDSF (671 aa). Tyr1544 is subject to O-(5'-phospho-RNA)-tyrosine. In terms of domain architecture, Peptidase C3 spans 1564-1742; sequence GPGFDYAVAM…FAAALKRSYF (179 aa). Catalysis depends on for protease 3C activity residues His1603, Glu1634, and Cys1710. The RdRp catalytic domain occupies 1971-2086; that stretch reads MEEKLFDYTG…SYPHEVDASL (116 aa). Asp1977 and Asp2072 together coordinate Mg(2+).

The protein belongs to the picornaviruses polyprotein family. As to quaternary structure, interacts with capsid protein VP1 and capsid protein VP3 to form heterotrimeric protomers. In terms of assembly, interacts with capsid protein VP0, and capsid protein VP3 to form heterotrimeric protomers. Interacts with human PVR. Five protomers subsequently associate to form pentamers which serve as building blocks for the capsid. Interacts with capsid protein VP2, capsid protein VP3 and capsid protein VP4 following cleavage of capsid protein VP0. Interacts with capsid protein VP1 and capsid protein VP3 in the mature capsid. As to quaternary structure, interacts with capsid protein VP0 and capsid protein VP1 to form heterotrimeric protomers. Five protomers subsequently associate to form pentamers which serve as building blocks for the capsid. Interacts with capsid protein VP4 in the mature capsid. Interacts with protein 2C; this interaction may be important for virion morphogenesis. In terms of assembly, interacts with capsid protein VP1 and capsid protein VP3. Homodimer. As to quaternary structure, homohexamer; forms a hexameric ring structure with 6-fold symmetry characteristic of AAA+ ATPases. Interacts (via N-terminus) with host RTN3 (via reticulon domain); this interaction is important for viral replication. Interacts with capsid protein VP3; this interaction may be important for virion morphogenesis. In terms of assembly, interacts with protein 3CD. Homodimer. Interacts with host GBF1. Interacts (via GOLD domain) with host ACBD3 (via GOLD domain); this interaction allows the formation of a viral protein 3A/ACBD3 heterotetramer with a 2:2 stoichiometry, which will stimulate the recruitment of host PI4KB in order to synthesize PI4P at the viral RNA replication sites. As to quaternary structure, interacts with RNA-directed RNA polymerase. In terms of assembly, interacts with protein 3AB and with RNA-directed RNA polymerase. Interacts with Viral protein genome-linked and with protein 3CD. Mg(2+) serves as cofactor. In terms of processing, specific enzymatic cleavages in vivo by the viral proteases yield processing intermediates and the mature proteins. Myristoylation is required for the formation of pentamers during virus assembly. Further assembly of 12 pentamers and a molecule of genomic RNA generates the provirion. Post-translationally, during virion maturation, immature virions are rendered infectious following cleavage of VP0 into VP4 and VP2. This maturation seems to be an autocatalytic event triggered by the presence of RNA in the capsid and it is followed by a conformational change infectious virion. In terms of processing, myristoylation is required during RNA encapsidation and formation of the mature virus particle. VPg is uridylylated by the polymerase into VPg-pUpU. This acts as a nucleotide-peptide primer for the genomic RNA replication.

It is found in the virion. It localises to the host cytoplasm. Its subcellular location is the host cytoplasmic vesicle membrane. The protein resides in the host nucleus. The enzyme catalyses a ribonucleoside 5'-triphosphate + H2O = a ribonucleoside 5'-diphosphate + phosphate + H(+). It carries out the reaction Selective cleavage of Tyr-|-Gly bond in the picornavirus polyprotein.. It catalyses the reaction RNA(n) + a ribonucleoside 5'-triphosphate = RNA(n+1) + diphosphate. The catalysed reaction is Selective cleavage of Gln-|-Gly bond in the poliovirus polyprotein. In other picornavirus reactions Glu may be substituted for Gln, and Ser or Thr for Gly.. Replication or transcription is subject to high level of random mutations by the nucleotide analog ribavirin. Forms an icosahedral capsid of pseudo T=3 symmetry with capsid proteins VP2 and VP3. The capsid is 300 Angstroms in diameter, composed of 60 copies of each capsid protein and enclosing the viral positive strand RNA genome. Capsid protein VP1 mainly forms the vertices of the capsid. Capsid protein VP1 interacts with host cell receptor PVR to provide virion attachment to target host cells. This attachment induces virion internalization predominantly through clathrin- and caveolin-independent endocytosis in Hela cells and through caveolin-mediated endocytosis in brain microvascular endothelial cells. Tyrosine kinases are probably involved in the entry process. Virus binding to PVR induces increased junctional permeability and rearrangement of junctional proteins. Modulation of endothelial tight junctions, as well as cytolytic infection of endothelial cells themselves, may result in loss of endothelial integrity which may help the virus to reach the CNS. After binding to its receptor, the capsid undergoes conformational changes. Capsid protein VP1 N-terminus (that contains an amphipathic alpha-helix) and capsid protein VP4 are externalized. Together, they shape a pore in the host membrane through which viral genome is translocated to host cell cytoplasm. In terms of biological role, forms an icosahedral capsid of pseudo T=3 symmetry with capsid proteins VP2 and VP3. The capsid is 300 Angstroms in diameter, composed of 60 copies of each capsid protein and enclosing the viral positive strand RNA genome. Its function is as follows. Lies on the inner surface of the capsid shell. After binding to the host receptor, the capsid undergoes conformational changes. Capsid protein VP4 is released, Capsid protein VP1 N-terminus is externalized, and together, they shape a pore in the host membrane through which the viral genome is translocated into the host cell cytoplasm. Functionally, component of immature procapsids, which is cleaved into capsid proteins VP4 and VP2 after maturation. Allows the capsid to remain inactive before the maturation step. Cysteine protease that cleaves viral polyprotein and specific host proteins. It is responsible for the autocatalytic cleavage between the P1 and P2 regions, which is the first cleavage occurring in the polyprotein. Also cleaves the host translation initiation factor EIF4G1, in order to shut down the capped cellular mRNA translation. Inhibits the host nucleus-cytoplasm protein and RNA trafficking by cleaving host members of the nuclear pores including NUP98, NUP62 and NUP153. Counteracts stress granule formation probably by antagonizing its assembly or promoting its dissassembly. Cleaves and inhibits host IFIH1/MDA5, thereby inhibiting the type-I IFN production and the establishment of the antiviral state. Cleaves and inhibits host MAVS, thereby inhibiting the type-I IFN production and the establishment of the antiviral state. In terms of biological role, plays an essential role in the virus replication cycle by acting as a viroporin. Creates a pore in the host endoplasmic reticulum and as a consequence releases Ca2+ in the cytoplasm of infected cell. In turn, high levels of cytoplasmic calcium may trigger membrane trafficking and transport of viral ER-associated proteins to viroplasms, sites of viral genome replication. Its function is as follows. Induces and associates with structural rearrangements of intracellular membranes. Displays RNA-binding, nucleotide binding and NTPase activities. May play a role in virion morphogenesis and viral RNA encapsidation by interacting with the capsid protein VP3. Functionally, localizes the viral replication complex to the surface of membranous vesicles. Together with protein 3CD binds the Cis-Active RNA Element (CRE) which is involved in RNA synthesis initiation. Acts as a cofactor to stimulate the activity of 3D polymerase, maybe through a nucleid acid chaperone activity. Localizes the viral replication complex to the surface of membranous vesicles. It inhibits host cell endoplasmic reticulum-to-Golgi apparatus transport and causes the disassembly of the Golgi complex, possibly through GBF1 interaction. This would result in depletion of MHC, trail receptors and IFN receptors at the host cell surface. Plays an essential role in viral RNA replication by recruiting ACBD3 and PI4KB at the viral replication sites, thereby allowing the formation of the rearranged membranous structures where viral replication takes place. In terms of biological role, acts as a primer for viral RNA replication and remains covalently bound to viral genomic RNA. VPg is uridylylated prior to priming replication into VPg-pUpU. The oriI viral genomic sequence may act as a template for this. The VPg-pUpU is then used as primer on the genomic RNA poly(A) by the RNA-dependent RNA polymerase to replicate the viral genome. During genome replication, the VPg-RNA linkage is removed by the host TDP2, thereby accelerating replication. During the late stage of the replication cycle, host TDP2 is excluded from sites of viral RNA synthesis and encapsidation, allowing for the generation of progeny virions. Its function is as follows. Involved in the viral replication complex and viral polypeptide maturation. It exhibits protease activity with a specificity and catalytic efficiency that is different from protease 3C. Protein 3CD lacks polymerase activity. Protein 3CD binds to the 5'UTR of the viral genome. Functionally, major viral protease that mediates proteolytic processing of the polyprotein. Cleaves host EIF5B, contributing to host translation shutoff. Also cleaves host PABPC1, contributing to host translation shutoff. Cleaves host RIGI and thus contributes to the inhibition of type I interferon production. Cleaves host NLRP1, triggers host N-glycine-mediated degradation of the autoinhibitory NLRP1 N-terminal fragment. Inhibits the integrated stress response (ISR) in the infected cell by cleaving host G3BP1. Stress granule formation is thus inhibited, which allows protein synthesis and viral replication. Replicates the viral genomic RNA on the surface of intracellular membranes. May form linear arrays of subunits that propagate along a strong head-to-tail interaction called interface-I. Covalently attaches UMP to a tyrosine of VPg, which is used to prime RNA synthesis. The positive stranded RNA genome is first replicated at virus induced membranous vesicles, creating a dsRNA genomic replication form. This dsRNA is then used as template to synthesize positive stranded RNA genomes. ss(+)RNA genomes are either translated, replicated or encapsidated. The sequence is that of Genome polyprotein from Homo sapiens (Human).